The chain runs to 76 residues: Large ribosomal subunit protein bL31 (76 aa).

Zn(2+)-binding residues include Cys16, Cys18, Cys38, and Cys41.

Belongs to the bacterial ribosomal protein bL31 family. Type A subfamily. Part of the 50S ribosomal subunit. Requires Zn(2+) as cofactor.

In terms of biological role, binds the 23S rRNA. This Nocardia farcinica (strain IFM 10152) protein is Large ribosomal subunit protein bL31.